The primary structure comprises 191 residues: UPF0312 protein PA0423 (191 aa).

A signal peptide spans 1–23 (MLKKTLAALALGSALFTAGQAMA).

It belongs to the UPF0312 family. Type 1 subfamily.

The protein resides in the periplasm. The sequence is that of UPF0312 protein PA0423 from Pseudomonas aeruginosa (strain ATCC 15692 / DSM 22644 / CIP 104116 / JCM 14847 / LMG 12228 / 1C / PRS 101 / PAO1).